The chain runs to 105 residues: TMEM14 protein homolog YJR085C (105 aa).

Helical transmembrane passes span 26–46 (IPSL…GYLL), 53–73 (GLEM…IRGM), and 77–97 (FTKP…YYYY).

This sequence belongs to the TMEM14 family.

It is found in the mitochondrion. The protein resides in the membrane. This chain is TMEM14 protein homolog YJR085C, found in Saccharomyces cerevisiae (strain ATCC 204508 / S288c) (Baker's yeast).